The sequence spans 618 residues: Phostensin (618 aa).

Over residues 15-33 (RRQEEAAVRGREKAERERL) the composition is skewed to basic and acidic residues. The segment at 15–505 (RRQEEAAVRG…PATADAAVPG (491 aa)) is disordered. The residue at position 54 (S54) is a Phosphoserine. Positions 96–109 (QQQQQQQQQQQQQQ) are enriched in low complexity. Composition is skewed to basic and acidic residues over residues 110–160 (RSEE…ERRL) and 173–197 (LESR…EVRK). Phosphoserine occurs at positions 131, 139, 181, and 201. The residue at position 205 (T205) is a Phosphothreonine. S231 is modified (phosphoserine). 2 stretches are compositionally biased toward basic and acidic residues: residues 234-245 (DSDHEKLGLTDA) and 271-289 (SGEE…EERT). Residues 308–319 (EAAGSSSGGVEA) show a composition bias toward low complexity. The span at 348–358 (KVRDRTPRDTE) shows a compositional bias: basic and acidic residues. The span at 429–451 (RPPPAAPLSPPPPAPPAPQPPGD) shows a compositional bias: pro residues. Residue S437 is modified to Phosphoserine. K462 carries the N6-acetyllysine modification. Residues 485–505 (APPAAAATPATPATADAAVPG) show a composition bias toward low complexity. Residue S535 is modified to Phosphoserine. Residues 556–594 (YQYPSESSVLEELGPEPEAPSAPSPPAAQPDDEEDEEEL) are disordered. Over residues 572-583 (PEAPSAPSPPAA) the composition is skewed to pro residues. Over residues 585–594 (PDDEEDEEEL) the composition is skewed to acidic residues.

Interacts with Protein phosphatase 1 (PP1).

Its subcellular location is the cytoplasm. It is found in the cytoskeleton. Its function is as follows. May target protein phosphatase 1 to F-actin cytoskeleton. This Sus scrofa (Pig) protein is Phostensin (PPP1R18).